The chain runs to 376 residues: 2-oxoglutarate synthase subunit KorA (376 aa).

Heterotetramer of the KorA, KorB, KorC and KorD subunits.

It catalyses the reaction 2 oxidized [2Fe-2S]-[ferredoxin] + 2-oxoglutarate + CoA = succinyl-CoA + 2 reduced [2Fe-2S]-[ferredoxin] + CO2 + H(+). The protein is 2-oxoglutarate synthase subunit KorA (korA) of Methanothermobacter thermautotrophicus (strain ATCC 29096 / DSM 1053 / JCM 10044 / NBRC 100330 / Delta H) (Methanobacterium thermoautotrophicum).